The following is a 150-amino-acid chain: UPF0178 protein Bcep18194_A4809 (150 aa).

Belongs to the UPF0178 family.

The protein is UPF0178 protein Bcep18194_A4809 of Burkholderia lata (strain ATCC 17760 / DSM 23089 / LMG 22485 / NCIMB 9086 / R18194 / 383).